We begin with the raw amino-acid sequence, 828 residues long: DNA gyrase subunit A (828 aa).

The region spanning 32–497 (LPDVRDGLKP…EVLSLEDEDL (466 aa)) is the Topo IIA-type catalytic domain. Catalysis depends on Tyr120, which acts as the O-(5'-phospho-DNA)-tyrosine intermediate. Positions 524 to 530 (QKRGGRG) match the GyrA-box motif.

The protein belongs to the type II topoisomerase GyrA/ParC subunit family. As to quaternary structure, heterotetramer, composed of two GyrA and two GyrB chains. In the heterotetramer, GyrA contains the active site tyrosine that forms a transient covalent intermediate with DNA, while GyrB binds cofactors and catalyzes ATP hydrolysis.

It localises to the cytoplasm. It carries out the reaction ATP-dependent breakage, passage and rejoining of double-stranded DNA.. In terms of biological role, a type II topoisomerase that negatively supercoils closed circular double-stranded (ds) DNA in an ATP-dependent manner to modulate DNA topology and maintain chromosomes in an underwound state. Negative supercoiling favors strand separation, and DNA replication, transcription, recombination and repair, all of which involve strand separation. Also able to catalyze the interconversion of other topological isomers of dsDNA rings, including catenanes and knotted rings. Type II topoisomerases break and join 2 DNA strands simultaneously in an ATP-dependent manner. The protein is DNA gyrase subunit A of Streptococcus pyogenes serotype M1.